The chain runs to 198 residues: Dephospho-CoA kinase (198 aa).

In terms of domain architecture, DPCK spans 4 to 198; that stretch reads FLGLTGGIAS…LSDLLQEIGR (195 aa). Residue 12–17 participates in ATP binding; sequence ASGKST.

This sequence belongs to the CoaE family.

The protein resides in the cytoplasm. The catalysed reaction is 3'-dephospho-CoA + ATP = ADP + CoA + H(+). It functions in the pathway cofactor biosynthesis; coenzyme A biosynthesis; CoA from (R)-pantothenate: step 5/5. Catalyzes the phosphorylation of the 3'-hydroxyl group of dephosphocoenzyme A to form coenzyme A. The sequence is that of Dephospho-CoA kinase from Lactobacillus johnsonii (strain CNCM I-12250 / La1 / NCC 533).